A 191-amino-acid polypeptide reads, in one-letter code: Octanoyltransferase (191 aa).

The 176-residue stretch at 10-185 (ENSHDEIWLV…NILALLNNPP (176 aa)) folds into the BPL/LPL catalytic domain. Residues 49 to 56 (RGGQVTYH), 116 to 118 (SLG), and 129 to 131 (GLA) each bind substrate. Cys147 functions as the Acyl-thioester intermediate in the catalytic mechanism.

This sequence belongs to the LipB family.

Its subcellular location is the cytoplasm. The enzyme catalyses octanoyl-[ACP] + L-lysyl-[protein] = N(6)-octanoyl-L-lysyl-[protein] + holo-[ACP] + H(+). The protein operates within protein modification; protein lipoylation via endogenous pathway; protein N(6)-(lipoyl)lysine from octanoyl-[acyl-carrier-protein]: step 1/2. In terms of biological role, catalyzes the transfer of endogenously produced octanoic acid from octanoyl-acyl-carrier-protein onto the lipoyl domains of lipoate-dependent enzymes. Lipoyl-ACP can also act as a substrate although octanoyl-ACP is likely to be the physiological substrate. This Salmonella choleraesuis (strain SC-B67) protein is Octanoyltransferase.